We begin with the raw amino-acid sequence, 374 residues long: Potassium channel subfamily K member 9 (374 aa).

Topologically, residues 1–8 (MKRQNVRT) are cytoplasmic. A helical transmembrane segment spans residues 9–29 (LSLIICTFTYLLVGAAVFDAL). Residues 30-88 (ESDYEMREEEKLKAEEIRLKGKYNISSEDYRQLELVIMQSEPHRAGVQWKFAGSFYFAI) are Extracellular-facing. N53 is a glycosylation site (N-linked (GlcNAc...) asparagine). Positions 89-101 (TVITTIGYGHAAP) form an intramembrane region, pore-forming. The Extracellular segment spans residues 102–107 (GTDAGK). A helical membrane pass occupies residues 108–128 (AFCMFYAVLGIPLTLVMFQSL). The Cytoplasmic portion of the chain corresponds to 129–158 (GERMNTFVKYLLKRIKKCCGMHSTDVSMEN). Residues 159–179 (MVTVGFFSCMGTLCIGAAAFS) form a helical membrane-spanning segment. Residues 180–194 (HYEEWSFFQAYYYCF) lie on the Extracellular side of the membrane. The segment at residues 195-207 (ITLTTIGFGDYVA) is an intramembrane region (pore-forming). Topologically, residues 208-218 (LQKNRALQKKP) are extracellular. The chain crosses the membrane as a helical span at residues 219–239 (LYVAFSFMYILVGLTVIGAFL). The Cytoplasmic portion of the chain corresponds to 240–374 (NLVVLRFLTM…HRLMKRRKSI (135 aa)).

This sequence belongs to the two pore domain potassium channel (TC 1.A.1.8) family. In terms of assembly, homodimer. May form heterodimers with other family members.

It localises to the cell membrane. Its function is as follows. pH-dependent, voltage-insensitive, background potassium channel protein. This Xenopus laevis (African clawed frog) protein is Potassium channel subfamily K member 9 (kcnk9).